Here is a 534-residue protein sequence, read N- to C-terminus: MQRRDFIRNASLALAAFGLPSLPACAASRSGQMGLRRLGQPQPFDFATLKGQARALAQAPYKSHKRVLPGRLEGLDWDQYQSIGYRQDHALWADQPGKFQAKFFHLGLYFHSPVRMFDVVDGKAQELAYDGAAFNYGKSGIKDGELPADLGFAGFRLNTRKDTDRDFAAFLGASYFRAVGKEGQYGQSARGLAIDTGMGKPEEFPDFIAYYLEQPSADSDTIVVYGLLDSPSVAGAYRFAITNGDVLLMDIDSALYPRKAIERLGIAPCTSMYQVGENDRRMAWDWRPEIHDTDGLSLWTGAGEWIWRPLLNPRNLRFNMFVDRNPRGFGLLQRDRNFDHYQDDGVFYEKRPCLWVEPKGEWGEGSVQLVEIPTVDETFDNIVAFWNPKEKPQPGQELLVGYRLYWGAEPPARPPLAHCVASRTGLGGVVGKKREYFSWRFAVDFEGGELARLIDKGEVEAVVEASRGRVEIVSARPLREINGYRAMFDLVPPEGSTEQIDIRLFLRSGGKTLTETWLYQYTPPPAGAPERTLY.

Positions 1-26 (MQRRDFIRNASLALAAFGLPSLPACA) form a signal peptide, tat-type signal.

Belongs to the OpgD/OpgG family. Predicted to be exported by the Tat system. The position of the signal peptide cleavage has not been experimentally proven.

The protein localises to the periplasm. It participates in glycan metabolism; osmoregulated periplasmic glucan (OPG) biosynthesis. In terms of biological role, probably involved in the control of the structural glucose backbone of osmoregulated periplasmic glucans (OPGs). The protein is Glucans biosynthesis protein D of Stenotrophomonas maltophilia (strain K279a).